The following is a 153-amino-acid chain: 6,7-dimethyl-8-ribityllumazine synthase (153 aa).

5-amino-6-(D-ribitylamino)uracil contacts are provided by residues F22, 56–58 (AFE), and 80–82 (TVI). Position 85–86 (85–86 (ST)) interacts with (2S)-2-hydroxy-3-oxobutyl phosphate. H88 functions as the Proton donor in the catalytic mechanism. F113 is a binding site for 5-amino-6-(D-ribitylamino)uracil. R127 is a (2S)-2-hydroxy-3-oxobutyl phosphate binding site.

The protein belongs to the DMRL synthase family. As to quaternary structure, forms an icosahedral capsid composed of 60 subunits, arranged as a dodecamer of pentamers.

The enzyme catalyses (2S)-2-hydroxy-3-oxobutyl phosphate + 5-amino-6-(D-ribitylamino)uracil = 6,7-dimethyl-8-(1-D-ribityl)lumazine + phosphate + 2 H2O + H(+). It functions in the pathway cofactor biosynthesis; riboflavin biosynthesis; riboflavin from 2-hydroxy-3-oxobutyl phosphate and 5-amino-6-(D-ribitylamino)uracil: step 1/2. Catalyzes the formation of 6,7-dimethyl-8-ribityllumazine by condensation of 5-amino-6-(D-ribitylamino)uracil with 3,4-dihydroxy-2-butanone 4-phosphate. This is the penultimate step in the biosynthesis of riboflavin. This is 6,7-dimethyl-8-ribityllumazine synthase from Actinobacillus pleuropneumoniae (Haemophilus pleuropneumoniae).